Consider the following 101-residue polypeptide: Putative pterin-4-alpha-carbinolamine dehydratase (101 aa).

Belongs to the pterin-4-alpha-carbinolamine dehydratase family.

It catalyses the reaction (4aS,6R)-4a-hydroxy-L-erythro-5,6,7,8-tetrahydrobiopterin = (6R)-L-erythro-6,7-dihydrobiopterin + H2O. This Rhodopseudomonas palustris (strain HaA2) protein is Putative pterin-4-alpha-carbinolamine dehydratase.